A 321-amino-acid polypeptide reads, in one-letter code: Cytochrome f (321 aa).

An N-terminal signal peptide occupies residues methionine 1–alanine 38. Heme is bound by residues phenylalanine 39, cysteine 59, cysteine 62, and histidine 63. A helical transmembrane segment spans residues valine 287–leucine 306.

It belongs to the cytochrome f family. In terms of assembly, the 4 large subunits of the cytochrome b6-f complex are cytochrome b6, subunit IV (17 kDa polypeptide, petD), cytochrome f and the Rieske protein, while the 4 small subunits are PetG, PetL, PetM and PetN. The complex functions as a dimer. Heme serves as cofactor.

It is found in the plastid. The protein resides in the chloroplast thylakoid membrane. Component of the cytochrome b6-f complex, which mediates electron transfer between photosystem II (PSII) and photosystem I (PSI), cyclic electron flow around PSI, and state transitions. The polypeptide is Cytochrome f (petA) (Guillardia theta (Cryptophyte)).